A 123-amino-acid polypeptide reads, in one-letter code: Ribosome-binding factor A (123 aa).

Belongs to the RbfA family. Monomer. Binds 30S ribosomal subunits, but not 50S ribosomal subunits or 70S ribosomes.

Its subcellular location is the cytoplasm. Functionally, one of several proteins that assist in the late maturation steps of the functional core of the 30S ribosomal subunit. Associates with free 30S ribosomal subunits (but not with 30S subunits that are part of 70S ribosomes or polysomes). Required for efficient processing of 16S rRNA. May interact with the 5'-terminal helix region of 16S rRNA. The polypeptide is Ribosome-binding factor A (Legionella pneumophila (strain Lens)).